A 131-amino-acid polypeptide reads, in one-letter code: Calvin cycle protein CP12-2, chloroplastic (131 aa).

The transit peptide at 1–53 (MATIATGLNIATQRVFVTSENRPVCLAGPVHLNNSWNLGSRTTNRMMKLQPIK) directs the protein to the chloroplast. Intrachain disulfides connect Cys75-Cys84 and Cys117-Cys126. The tract at residues 97–131 (AASHARDKKKADGSDPLEEYCKDNPETNECRTYDN) is disordered. Residues 105 to 131 (KKADGSDPLEEYCKDNPETNECRTYDN) show a composition bias toward basic and acidic residues.

The protein belongs to the CP12 family. Monomer. Component of a complex that contains two dimers of PRK, two tetramers of GAPDH and CP12. CP12 associates with GAPDH, causing its conformation to change. This GAPDH/CP12 complex binds PRK to form a half-complex (one unit). This unit probably dimerizes due partially to interactions between the enzymes of each unit. In terms of processing, contains two disulfide bonds; only the oxidized protein, with two disulfide bonds, is active in complex formation. The C-terminal disulfide is involved in the interaction with GAPDH and the N-terminal disulfide mediates the binding of PRK with this binary complex. In terms of tissue distribution, mostly expressed in cotyledons, leaves and flower stalks, and, to a lower extent, in flowers and stems. Barely detectable in roots and siliques.

The protein localises to the plastid. Its subcellular location is the chloroplast. Functionally, acts as a linker essential in the assembly of a core complex of PRK/GAPDH. Coordinates the reversible inactivation of chloroplast enzymes GAPDH and PRK during darkness in photosynthetic tissues. The protein is Calvin cycle protein CP12-2, chloroplastic (CP12-2) of Arabidopsis thaliana (Mouse-ear cress).